The primary structure comprises 813 residues: Homeobox-leucine zipper protein ROC4 (813 aa).

The disordered stretch occupies residues 62–112 (EVENEMSRSGSDHLDVVSCGDAGGGGGDDDDDEDAEHGNPPKRKKRYHRHT). Residues 101-112 (PPKRKKRYHRHT) show a composition bias toward basic residues. The segment at residues 104–163 (RKKRYHRHTPQQIQELEAMFKECPHPDEKQRAELSKRLGLEPRQVKFWFQNRRTQMKMQL) is a DNA-binding region (homeobox). Residues 152–191 (FQNRRTQMKMQLERHENSLLKQENDKLRSENLSIREATSN) are a coiled coil. An START domain is found at 306–559 (AGIDKSLFLE…LQRQCECLAL (254 aa)).

This sequence belongs to the HD-ZIP homeobox family. Class IV subfamily.

The protein localises to the nucleus. Functionally, probable transcription factor. The protein is Homeobox-leucine zipper protein ROC4 (ROC4) of Oryza sativa subsp. japonica (Rice).